The following is a 174-amino-acid chain: CDP-archaeol synthase (174 aa).

Transmembrane regions (helical) follow at residues 51-71, 74-94, 112-132, and 136-156; these read LIGL…AGFI, SLLV…ALLG, MLPI…TFLL, and WLLA…IPVF.

This sequence belongs to the CDP-archaeol synthase family. Requires Mg(2+) as cofactor.

Its subcellular location is the cell membrane. It catalyses the reaction 2,3-bis-O-(geranylgeranyl)-sn-glycerol 1-phosphate + CTP + H(+) = CDP-2,3-bis-O-(geranylgeranyl)-sn-glycerol + diphosphate. The protein operates within membrane lipid metabolism; glycerophospholipid metabolism. In terms of biological role, catalyzes the formation of CDP-2,3-bis-(O-geranylgeranyl)-sn-glycerol (CDP-archaeol) from 2,3-bis-(O-geranylgeranyl)-sn-glycerol 1-phosphate (DGGGP) and CTP. This reaction is the third ether-bond-formation step in the biosynthesis of archaeal membrane lipids. In Methanocella arvoryzae (strain DSM 22066 / NBRC 105507 / MRE50), this protein is CDP-archaeol synthase.